A 346-amino-acid polypeptide reads, in one-letter code: NADP-dependent alcohol dehydrogenase C (346 aa).

The Zn(2+) site is built by cysteine 41, histidine 63, cysteine 94, cysteine 97, cysteine 100, cysteine 108, and cysteine 158.

This sequence belongs to the zinc-containing alcohol dehydrogenase family. It depends on Zn(2+) as a cofactor.

It catalyses the reaction a primary alcohol + NADP(+) = an aldehyde + NADPH + H(+). This is NADP-dependent alcohol dehydrogenase C (adhC) from Mycobacterium bovis (strain ATCC BAA-935 / AF2122/97).